The sequence spans 615 residues: Dihydroxy-acid dehydratase (615 aa).

Residue Asp81 coordinates Mg(2+). Residue Cys122 participates in [2Fe-2S] cluster binding. Residues Asp123 and Lys124 each contribute to the Mg(2+) site. Lys124 is subject to N6-carboxylysine. Cys195 contacts [2Fe-2S] cluster. Glu491 is a Mg(2+) binding site. Ser517 acts as the Proton acceptor in catalysis.

It belongs to the IlvD/Edd family. In terms of assembly, homodimer. The cofactor is [2Fe-2S] cluster. It depends on Mg(2+) as a cofactor.

The enzyme catalyses (2R)-2,3-dihydroxy-3-methylbutanoate = 3-methyl-2-oxobutanoate + H2O. The catalysed reaction is (2R,3R)-2,3-dihydroxy-3-methylpentanoate = (S)-3-methyl-2-oxopentanoate + H2O. The protein operates within amino-acid biosynthesis; L-isoleucine biosynthesis; L-isoleucine from 2-oxobutanoate: step 3/4. It participates in amino-acid biosynthesis; L-valine biosynthesis; L-valine from pyruvate: step 3/4. Functions in the biosynthesis of branched-chain amino acids. Catalyzes the dehydration of (2R,3R)-2,3-dihydroxy-3-methylpentanoate (2,3-dihydroxy-3-methylvalerate) into 2-oxo-3-methylpentanoate (2-oxo-3-methylvalerate) and of (2R)-2,3-dihydroxy-3-methylbutanoate (2,3-dihydroxyisovalerate) into 2-oxo-3-methylbutanoate (2-oxoisovalerate), the penultimate precursor to L-isoleucine and L-valine, respectively. In Shewanella pealeana (strain ATCC 700345 / ANG-SQ1), this protein is Dihydroxy-acid dehydratase.